The sequence spans 539 residues: Acid-sensing ion channel 4 (539 aa).

Residues 1–68 (MPIEIVCKIK…GPGPHGLRRT (68 aa)) are Cytoplasmic-facing. The chain crosses the membrane as a helical span at residues 69-89 (LWVLALLTSLAAFLYQAASLA). Residues 90–438 (RGYLTRPHLV…EQRAAYGLSA (349 aa)) are Extracellular-facing. 2 disulfide bridges follow: Cys-118-Cys-202 and Cys-180-Cys-187. 4 N-linked (GlcNAc...) asparagine glycosylation sites follow: Asn-191, Asn-243, Asn-341, and Asn-376. Disulfide bonds link Cys-296–Cys-375, Cys-318–Cys-371, Cys-322–Cys-369, Cys-331–Cys-353, and Cys-333–Cys-345. The chain crosses the membrane as a helical span at residues 439-459 (LLGDLGGQMGLFIGASILTLL). A GAS motif; ion selectivity filter motif is present at residues 452 to 454 (GAS). Residues 460-539 (EILDYIYEVS…PGSLFEDFAC (80 aa)) lie on the Cytoplasmic side of the membrane. Residues 501 to 531 (EQSPCPNRGRAEGGGASNLLPNHHHPHGPPG) are disordered.

Belongs to the amiloride-sensitive sodium channel (TC 1.A.6) family. ASIC4 subfamily. As to quaternary structure, homotrimer. Heterotrimer; with other ASIC proteins producing functional channels. In terms of tissue distribution, expressed in brain, spinal cord and dorsal root ganglion (DRG). Expressed by a subset of sensory neurons in the DRG. Expressed by granule cells in the cerebellar cortex. In hippocampus, expression is detected in dentate gyrus granule cells, in pyramidal cells of CA1-CA3 subfields and in interneurons of the striatum oriens and radiatum of all subfields. In cerebral cortex expressed in small, medium and large pyramidal cells in layers 2, 3 and 5 respectively. Also expressed in striatum, globus pallidus, inferior and superior calliculi, amygdala, magnocellular preoptic nucleus, islands of Calleja and large neurons of olfactory tubercules.

The protein resides in the cell membrane. Does not exhibit measurable stand-alone pH-gated sodium channel activity but may form pH-gated heterotrimeric sodium channels. Its activity could also depend on alternative gating mechanisms. The polypeptide is Acid-sensing ion channel 4 (Rattus norvegicus (Rat)).